The sequence spans 200 residues: MTNELINGVALADTPEKLVKAVQELALAKDVAAIPTLIAVFGYNNPTAAAIASTALVQLGEVAVPQLLTQIDDYNYGARAYSIRTLAAIADPRALDVLIDAAATDFAPSVRRAAAKGLGNLHWHKLEFPDNQTAPKKALETLLFISQDAEWSIRYAAIVGLQGLVNIPDLQQPIHTRLKEMLASDAEKAVRARILLAQSQ.

Belongs to the CpcE/RpcE/PecE family. In terms of assembly, cpcE and CpcF associate to form a lyase.

Required for the chromophorylation of the CpcA gene product. The chain is Phycocyanobilin lyase subunit beta (cpcF) from Nostoc sp. (strain PCC 7120 / SAG 25.82 / UTEX 2576).